We begin with the raw amino-acid sequence, 370 residues long: Selenide, water dikinase 2 (370 aa).

The active site involves Sec24. A non-standard amino acid (selenocysteine) is located at residue Sec24. ATP-binding positions include Lys27, 55–57 (GMD), Asp76, and Asp99. Asp57 provides a ligand contact to Mg(2+). 2 residues coordinate Mg(2+): Asp99 and Asp258.

The protein belongs to the selenophosphate synthase 1 family. Class I subfamily. As to quaternary structure, homodimer. It depends on Mg(2+) as a cofactor. In terms of tissue distribution, first expressed in the midgut anlagen with subsequent expression in a variety of tissues including the gut and nervous system.

It carries out the reaction hydrogenselenide + ATP + H2O = selenophosphate + AMP + phosphate + 2 H(+). In terms of biological role, synthesizes selenophosphate from selenide and ATP. In Drosophila melanogaster (Fruit fly), this protein is Selenide, water dikinase 2 (Sps2).